An 807-amino-acid polypeptide reads, in one-letter code: 85/88 kDa calcium-independent phospholipase A2 (807 aa).

At serine 13 the chain carries Phosphoserine. ANK repeat units lie at residues 120-147, 151-181, 185-215, 219-248, 251-281, 286-312, 316-345, 349-378, and 382-403; these read WTVT…ANST, EGCT…QMDV, KGET…GLNQ, QGLT…RCNI, PGGF…QIHS, YGAS…DVDS, SGNT…NAGA, HGNT…EVDT, and FGET…KALL. The next 2 helical transmembrane spans lie at 481 to 501 and 512 to 532; these read LLCL…LIAI and LFDW…ILHS. A PNPLA domain is found at 482 to 666; it reads LCLDGGGVKG…LANNPTLDAM (185 aa). The GXGXXG motif lies at 486 to 491; that stretch reads GGGVKG. The GXSXG signature appears at 518-522; sequence GTSTG. Serine 520 functions as the Nucleophile in the catalytic mechanism. Aspartate 653 functions as the Proton acceptor in the catalytic mechanism. A DGA/G motif is present at residues 653–655; the sequence is DGG. Residues 678–687 form a calmodulin-binding (1-9-14 motif) region; sequence RKGQGNKVKK. A calmodulin-binding (IQ motif) region spans residues 749–760; it reads AWCEMVGIQYFR.

In terms of assembly, homodimer formed by catalytic domains tightly interacting through a large hydrophobic interface. The contact area involves 3 alpha helices, several loops and a part of the beta sheet from each monomer. Both active sites of the dimer are in close proximity adopting an open conformation that provide sufficient space for phospholipid access and favoring cooperativity in deacylation-reacylation reactions. Each monomer has 9 ankyrin repeats stacked side-by-side in an elongated structure oriented outwards from the catalytic core. As to expression, expressed in neurons of central and peripheral nervous system. Highly expressed in Purkinje cells in cerebellum and dorsal and ventral horn neurons in the spinal cord. Expressed in testis (at protein level). Expressed in skeletal muscle (at protein level).

Its subcellular location is the cytoplasm. The protein resides in the cell membrane. The protein localises to the mitochondrion. It is found in the cell projection. It localises to the pseudopodium. It catalyses the reaction a 1,2-diacyl-sn-glycero-3-phosphocholine + H2O = a 1-acyl-sn-glycero-3-phosphocholine + a fatty acid + H(+). The catalysed reaction is a 1-O-alkyl-2-acyl-sn-glycero-3-phosphocholine + H2O = a 1-O-alkyl-sn-glycero-3-phosphocholine + a fatty acid + H(+). It carries out the reaction 1,2-dihexadecanoyl-sn-glycero-3-phosphocholine + H2O = 1-hexadecanoyl-sn-glycero-3-phosphocholine + hexadecanoate + H(+). The enzyme catalyses 1-hexadecanoyl-2-(9Z-octadecenoyl)-sn-glycero-3-phosphocholine + H2O = 1-hexadecanoyl-sn-glycero-3-phosphocholine + (9Z)-octadecenoate + H(+). It catalyses the reaction 1-hexadecanoyl-2-(9Z,12Z-octadecadienoyl)-sn-glycero-3-phosphocholine + H2O = (9Z,12Z)-octadecadienoate + 1-hexadecanoyl-sn-glycero-3-phosphocholine + H(+). The catalysed reaction is 1-hexadecanoyl-2-(5Z,8Z,11Z,14Z-eicosatetraenoyl)-sn-glycero-3-phosphocholine + H2O = 1-hexadecanoyl-sn-glycero-3-phosphocholine + (5Z,8Z,11Z,14Z)-eicosatetraenoate + H(+). It carries out the reaction 1-octadecanoyl-2-(5Z,8Z,11Z,14Z-eicosatetraenoyl)-sn-glycero-3-phosphocholine + H2O = 1-octadecanoyl-sn-glycero-3-phosphocholine + (5Z,8Z,11Z,14Z)-eicosatetraenoate + H(+). The enzyme catalyses 1-hexadecanoyl-2-(5Z,8Z,11Z,14Z-eicosatetraenoyl)-sn-glycero-3-phosphoethanolamine + H2O = 1-hexadecanoyl-sn-glycero-3-phosphoethanolamine + (5Z,8Z,11Z,14Z)-eicosatetraenoate + H(+). It catalyses the reaction 1,2-dihexadecanoyl-sn-glycero-3-phosphate + H2O = 1-hexadecanoyl-sn-glycero-3-phosphate + hexadecanoate + H(+). The catalysed reaction is a 1-acyl-sn-glycero-3-phosphocholine + H2O = sn-glycerol 3-phosphocholine + a fatty acid + H(+). It carries out the reaction 1-hexadecanoyl-sn-glycero-3-phosphocholine + H2O = sn-glycerol 3-phosphocholine + hexadecanoate + H(+). The enzyme catalyses 1-(5Z,8Z,11Z,14Z-eicosatetraenoyl)-sn-glycero-3-phosphocholine + H2O = sn-glycerol 3-phosphocholine + (5Z,8Z,11Z,14Z)-eicosatetraenoate + H(+). It catalyses the reaction 2-(5Z,8Z,11Z,14Z)-eicosatetraenoyl-sn-glycero-3-phosphocholine + H2O = sn-glycerol 3-phosphocholine + (5Z,8Z,11Z,14Z)-eicosatetraenoate + H(+). The catalysed reaction is 1-O-hexadecyl-2-(5Z,8Z,11Z,14Z)-eicosatetraenoyl-sn-glycero-3-phosphocholine + H2O = 1-O-hexadecyl-sn-glycero-3-phosphocholine + (5Z,8Z,11Z,14Z)-eicosatetraenoate + H(+). It carries out the reaction 1-O-hexadecyl-2-acetyl-sn-glycero-3-phosphocholine + H2O = 1-O-hexadecyl-sn-glycero-3-phosphocholine + acetate + H(+). The enzyme catalyses hexadecanoyl-CoA + H2O = hexadecanoate + CoA + H(+). It catalyses the reaction 1',3'-bis[1,2-di-(9Z-octadecenoyl)-sn-glycero-3-phospho]-glycerol + H2O = 1'-[1,2-di-(9Z-octadecenoyl)-sn-glycero-3-phospho]-3'-[1-(9Z-octadecenoyl)-sn-glycero-3-phospho]-glycerol + (9Z)-octadecenoate + H(+). The catalysed reaction is 1'-[1,2-di-(9Z-octadecenoyl)-sn-glycero-3-phospho]-3'-[1-(9Z-octadecenoyl)-sn-glycero-3-phospho]-glycerol + H2O = 1',3'-bis-[1-(9Z-octadecenoyl)-sn-glycero-3-phospho]-glycerol + (9Z)-octadecenoate + H(+). It carries out the reaction 1',3'-bis-[1,2-di-(9Z,12Z-octadecadienoyl)-sn-glycero-3-phospho]-glycerol + H2O = 1'-[1,2-di-(9Z,12Z-octadecadienoyl)-sn-glycero-3-phospho]-3'-[1-(9Z,12Z-octadecadienoyl)-sn-glycero-3-phospho]-glycerol + (9Z,12Z)-octadecadienoate + H(+). The enzyme catalyses 1-octadecanoyl-2-(15-hydroxy-(5Z,8Z,11Z,13E)-eicosatetraenoyl)-sn-glycero-3-phosphoethanolamine + H2O = 1-octadecanoyl-sn-glycero-3-phosphoethanolamine + 15-hydroxy-(5Z,8Z,11Z,13E)-eicosatetraenoate + H(+). With respect to regulation, inhibited by calcium-activated calmodulin. Activated by ATP. Inhibited by bromoenol lactone (BEL). Its function is as follows. Calcium-independent phospholipase involved in phospholipid remodeling with implications in cellular membrane homeostasis, mitochondrial integrity and signal transduction. Hydrolyzes the ester bond of the fatty acyl group attached at sn-1 or sn-2 position of phospholipids (phospholipase A1 and A2 activity respectively), producing lysophospholipids that are used in deacylation-reacylation cycles. Hydrolyzes both saturated and unsaturated long fatty acyl chains in various glycerophospholipid classes such as phosphatidylcholines, phosphatidylethanolamines and phosphatidates, with a preference for hydrolysis at sn-2 position. Can further hydrolyze lysophospholipids carrying saturated fatty acyl chains (lysophospholipase activity). Upon oxidative stress, contributes to remodeling of mitochondrial phospholipids in pancreatic beta cells, in a repair mechanism to reduce oxidized lipid content. Preferentially hydrolyzes oxidized polyunsaturated fatty acyl chains from cardiolipins, yielding monolysocardiolipins that can be reacylated with unoxidized fatty acyls to regenerate native cardiolipin species. Hydrolyzes oxidized glycerophosphoethanolamines present in pancreatic islets, releasing oxidized polyunsaturated fatty acids such as hydroxyeicosatetraenoates (HETEs). Has thioesterase activity toward fatty-acyl CoA releasing CoA-SH known to facilitate fatty acid transport and beta-oxidation in mitochondria particularly in skeletal muscle. Plays a role in regulation of membrane dynamics and homeostasis. Selectively hydrolyzes sn-2 arachidonoyl group in plasmalogen phospholipids, structural components of lipid rafts and myelin. Regulates F-actin polymerization at the pseudopods, which is required for both speed and directionality of MCP1/CCL2-induced monocyte chemotaxis. Targets membrane phospholipids to produce potent lipid signaling messengers. Generates lysophosphatidate (LPA, 1-acyl-glycerol-3-phosphate), which acts via G-protein receptors in various cell types. Has phospholipase A2 activity toward platelet-activating factor (PAF, 1-O-alkyl-2-acetyl-sn-glycero-3-phosphocholine), likely playing a role in inactivation of this potent pro-inflammatory signaling lipid. In response to glucose, amplifies calcium influx in pancreatic beta cells to promote INS secretion. This chain is 85/88 kDa calcium-independent phospholipase A2 (Pla2g6), found in Mus musculus (Mouse).